The chain runs to 159 residues: Ribosomal RNA large subunit methyltransferase H (159 aa).

S-adenosyl-L-methionine contacts are provided by residues Leu-76, Gly-108, and 127 to 132; that span reads FGRMTY.

This sequence belongs to the RNA methyltransferase RlmH family. As to quaternary structure, homodimer.

It localises to the cytoplasm. It catalyses the reaction pseudouridine(1915) in 23S rRNA + S-adenosyl-L-methionine = N(3)-methylpseudouridine(1915) in 23S rRNA + S-adenosyl-L-homocysteine + H(+). Functionally, specifically methylates the pseudouridine at position 1915 (m3Psi1915) in 23S rRNA. The chain is Ribosomal RNA large subunit methyltransferase H from Carboxydothermus hydrogenoformans (strain ATCC BAA-161 / DSM 6008 / Z-2901).